Consider the following 1347-residue polypeptide: Probable serine/threonine-protein kinase DDB_G0288147 (1347 aa).

A Phorbol-ester/DAG-type zinc finger spans residues 12-67 (NHRFEPYTLKHLTICKRCEKEIIGVSNSAQICYSCKNIYHTRCCKEIETKKLELIC). Disordered stretches follow at residues 262-316 (PFNE…LNES), 333-402 (SNNS…KSSK), and 463-485 (DNNN…NNNN). Residues 271–282 (DSTLSASTYNRR) are compositionally biased toward polar residues. Low complexity-rich tracts occupy residues 286–316 (KNKN…LNES), 333–342 (SNNSNNLAAL), and 350–361 (TTTTTTTTTTTT). Composition is skewed to basic residues over residues 366–382 (NNHH…KSRK) and 389–402 (NKKK…KSSK). Low complexity predominate over residues 464-485 (NNNNNNNNNNNNNNNSNNNNNN). One can recognise a Protein kinase domain in the interval 599–854 (VKINVEIYDS…EILKVFYSLL (256 aa)). ATP is bound by residues 605–613 (IYDSPLCTV) and K626. Residue D724 is the Proton acceptor of the active site. Disordered regions lie at residues 937–1241 (SERK…IVNP) and 1282–1310 (SSDS…IRSP). Acidic residues predominate over residues 976-986 (IIDDDDDDDDD). Composition is skewed to low complexity over residues 1004–1015 (NINSENKNNNNV) and 1024–1062 (SSNS…NNNN). Polar residues-rich tracts occupy residues 1063–1083 (LRQN…NQLM) and 1118–1127 (LSSSQTSEIG). Composition is skewed to low complexity over residues 1128 to 1241 (DNNT…IVNP) and 1282 to 1291 (SSDSSNSLSD).

The protein belongs to the protein kinase superfamily. TKL Ser/Thr protein kinase family.

The catalysed reaction is L-seryl-[protein] + ATP = O-phospho-L-seryl-[protein] + ADP + H(+). It catalyses the reaction L-threonyl-[protein] + ATP = O-phospho-L-threonyl-[protein] + ADP + H(+). The sequence is that of Probable serine/threonine-protein kinase DDB_G0288147 from Dictyostelium discoideum (Social amoeba).